A 186-amino-acid chain; its full sequence is Peptidyl-tRNA hydrolase (186 aa).

TRNA is bound at residue tyrosine 14. The active-site Proton acceptor is histidine 19. The tRNA site is built by tyrosine 61, asparagine 63, and asparagine 107.

This sequence belongs to the PTH family. Monomer.

It localises to the cytoplasm. The enzyme catalyses an N-acyl-L-alpha-aminoacyl-tRNA + H2O = an N-acyl-L-amino acid + a tRNA + H(+). Its function is as follows. Hydrolyzes ribosome-free peptidyl-tRNAs (with 1 or more amino acids incorporated), which drop off the ribosome during protein synthesis, or as a result of ribosome stalling. Functionally, catalyzes the release of premature peptidyl moieties from peptidyl-tRNA molecules trapped in stalled 50S ribosomal subunits, and thus maintains levels of free tRNAs and 50S ribosomes. This is Peptidyl-tRNA hydrolase from Helicobacter pylori (strain Shi470).